The following is an 89-amino-acid chain: NADH-ubiquinone oxidoreductase chain 4L (89 aa).

The next 3 helical transmembrane spans lie at 1 to 21, 22 to 42, and 55 to 75; these read MNFS…NRKN, IILM…LILI, and FAVY…GILV.

It belongs to the complex I subunit 4L family.

It localises to the mitochondrion membrane. It catalyses the reaction a ubiquinone + NADH + 5 H(+)(in) = a ubiquinol + NAD(+) + 4 H(+)(out). In terms of biological role, core subunit of the mitochondrial membrane respiratory chain NADH dehydrogenase (Complex I) that is believed to belong to the minimal assembly required for catalysis. Complex I functions in the transfer of electrons from NADH to the respiratory chain. The immediate electron acceptor for the enzyme is believed to be ubiquinone. The polypeptide is NADH-ubiquinone oxidoreductase chain 4L (nd4L) (Aspergillus niger).